Consider the following 587-residue polypeptide: Sorting nexin 2A (587 aa).

2 disordered regions span residues 1-78 and 115-151; these read MMGS…DSDP and SPFDENSDSEINGTEDNSLHSQFSDSLSRSPSSSSSD. 2 stretches are compositionally biased toward polar residues: residues 42 to 59 and 123 to 134; these read NGDTSNSGYRSAMSTLSN and SEINGTEDNSLH. Residues 135 to 150 are compositionally biased toward low complexity; the sequence is SQFSDSLSRSPSSSSS. Ser144 carries the post-translational modification Phosphoserine. In terms of domain architecture, PX spans 157-277; it reads VSNPQKEQEI…KVFLQVQGKL (121 aa). Residues Arg201, Lys227, and Arg244 each coordinate a 1,2-diacyl-sn-glycero-3-phospho-(1D-myo-inositol-3-phosphate). Positions 331-586 constitute a BAR domain; sequence LRQSVSNDWG…TSQYDREKQS (256 aa).

The protein belongs to the sorting nexin family. Homodimer. Heterodimer with SNX1 or SNX2A. Component of the retromer complex which consists of VPS29 (MAG1), VPS26 (VPS26A or VPS26B), VPS35 (VPS35A or VPS35B or VPS35C), VPS5/17 (SNX1 or SNX2A or SNX2B). As to expression, ubiquitously expressed but at a lower level in flowers, siliques, and senescing leaves.

The protein resides in the cytoplasm. It localises to the endosome membrane. It is found in the prevacuolar compartment membrane. The protein localises to the golgi apparatus. Its subcellular location is the trans-Golgi network membrane. Plays a role in vesicular protein sorting. Acts at the crossroads between the secretory and endocytic pathways. Is involved in the endosome to vacuole protein transport and, as component of the membrane-associated retromer complex, is also involved in endosome-to-Golgi retrograde transport. Also involved in the efficient sorting of seed storage protein globulin 12S. The sequence is that of Sorting nexin 2A (SNX2A) from Arabidopsis thaliana (Mouse-ear cress).